We begin with the raw amino-acid sequence, 396 residues long: NAD(P)H oxidoreductase RTN4IP1, mitochondrial (396 aa).

A mitochondrion-targeting transit peptide spans 1–40 (MGVLKTCVLRRSACAAACFWRRTVIPKPPFRGISTTSARS). In terms of domain architecture, Enoyl reductase (ER) spans 52–393 (GKNEVLRFTQ…RGHARGKTVV (342 aa)). NADPH-binding residues include Ser-214, Gly-216, Val-217, Ser-237, Tyr-255, Asn-276, Leu-300, Ala-341, Phe-343, His-386, Ala-387, and Arg-388.

The protein belongs to the zinc-containing alcohol dehydrogenase family. Quinone oxidoreductase subfamily. In terms of assembly, interacts with RTN4, UQCRC1 and UQCRC2. Widely expressed in mitochondria-enriched tissues. Found in heart, kidney, liver, brain and spinal cord.

It is found in the mitochondrion matrix. The protein resides in the mitochondrion outer membrane. It carries out the reaction a 3-demethylubiquinone + NADH + 2 H(+) = a 3-demethylubiquinol + NAD(+). It catalyses the reaction a 3-demethylubiquinone + NADPH + 2 H(+) = a 3-demethylubiquinol + NADP(+). The catalysed reaction is 3-demethylubiquinone-10 + NADH + 2 H(+) = 3-demethylubiquinol-10 + NAD(+). The enzyme catalyses 3-demethylubiquinone-10 + NADPH + 2 H(+) = 3-demethylubiquinol-10 + NADP(+). It participates in cofactor biosynthesis; ubiquinone biosynthesis. Its function is as follows. NAD(P)H oxidoreductase involved in the ubiquinone biosynthetic pathway. Required for the O-methyltransferase activity of COQ3. Able to catalyze the oxidoreduction of 3-demethylubiquinone into 3-demethylubiquinol in vitro. However, it is unclear if 3-demethylubiquinone constitutes a substrate in vivo. May also play a role in the regulation of retinal ganglion cell (RGC) neurite outgrowth, and hence in the development of the inner retina and optic nerve. Appears to be a potent inhibitor of regeneration following spinal cord injury. This Mus musculus (Mouse) protein is NAD(P)H oxidoreductase RTN4IP1, mitochondrial.